Reading from the N-terminus, the 185-residue chain is Elongation factor P (185 aa).

Belongs to the elongation factor P family.

Its subcellular location is the cytoplasm. It participates in protein biosynthesis; polypeptide chain elongation. Its function is as follows. Involved in peptide bond synthesis. Stimulates efficient translation and peptide-bond synthesis on native or reconstituted 70S ribosomes in vitro. Probably functions indirectly by altering the affinity of the ribosome for aminoacyl-tRNA, thus increasing their reactivity as acceptors for peptidyl transferase. This Geobacillus thermodenitrificans (strain NG80-2) protein is Elongation factor P.